A 253-amino-acid chain; its full sequence is tRNA uridine(34) hydroxylase (253 aa).

A Rhodanese domain is found at 127–221 (HGRPLVLLDT…YFEDVGGEGY (95 aa)). C181 (cysteine persulfide intermediate) is an active-site residue.

This sequence belongs to the TrhO family.

The catalysed reaction is uridine(34) in tRNA + AH2 + O2 = 5-hydroxyuridine(34) in tRNA + A + H2O. Catalyzes oxygen-dependent 5-hydroxyuridine (ho5U) modification at position 34 in tRNAs. This is tRNA uridine(34) hydroxylase from Xanthomonas campestris pv. campestris (strain B100).